The sequence spans 561 residues: Small ribosomal subunit protein bS1 (561 aa).

6 S1 motif domains span residues 22–88, 106–172, 193–261, 278–348, 365–435, and 452–521; these read GEVI…LSRE, GDIL…VSRR, GSVI…LGMK, GTRL…LGMK, GDKI…LGIK, and GSLV…LSVK.

It belongs to the bacterial ribosomal protein bS1 family.

In terms of biological role, binds mRNA; thus facilitating recognition of the initiation point. It is needed to translate mRNA with a short Shine-Dalgarno (SD) purine-rich sequence. The chain is Small ribosomal subunit protein bS1 (rpsA) from Neisseria meningitidis serogroup B (strain ATCC BAA-335 / MC58).